The primary structure comprises 312 residues: Very-long-chain 3-oxoacyl-CoA reductase (312 aa).

A helical membrane pass occupies residues 4–24 (ALPAAGFLYWVGAGTVAYLAL). 50 to 79 (GEWAVVTGSTDGIGKSYAEELAKHGMKVVL) serves as a coordination point for NADP(+). The next 2 membrane-spanning stretches (helical) occupy residues 182–202 (GAILNISSGSGMLPVPLLTIY) and 271–291 (GYLIHALMGSIISNLPSWIYL). Serine 189 contacts substrate. Tyrosine 202 (proton acceptor) is an active-site residue. The Di-lysine motif motif lies at 308-312 (KTKKN).

Belongs to the short-chain dehydrogenases/reductases (SDR) family. 17-beta-HSD 3 subfamily. Interacts with ELOVL1 and LASS2. In terms of tissue distribution, expressed in most tissues tested. Highly expressed in the ovary and mammary. Expressed in platelets.

It localises to the endoplasmic reticulum membrane. The enzyme catalyses a very-long-chain (3R)-3-hydroxyacyl-CoA + NADP(+) = a very-long-chain 3-oxoacyl-CoA + NADPH + H(+). The catalysed reaction is 17beta-estradiol + NAD(+) = estrone + NADH + H(+). It catalyses the reaction 17beta-estradiol + NADP(+) = estrone + NADPH + H(+). It carries out the reaction 3-oxooctadecanoyl-CoA + NADPH + H(+) = (3R)-hydroxyoctadecanoyl-CoA + NADP(+). The enzyme catalyses (7Z,10Z,13Z,16Z)-3-oxodocosatetraenoyl-CoA + NADPH + H(+) = (3R)-hydroxy-(7Z,10Z,13Z,16Z)-docosatetraenoyl-CoA + NADP(+). The catalysed reaction is 3-oxo-(7Z,10Z,13Z,16Z,19Z)-docosapentaenoyl-CoA + NADPH + H(+) = (3R)-hydroxy-(7Z,10Z,13Z,16Z,19Z)-docosapentaenoyl-CoA + NADP(+). It catalyses the reaction (8Z,11Z,14Z)-3-oxoeicosatrienoyl-CoA + NADPH + H(+) = (3R)-hydroxy-(8Z,11Z,14Z)-eicosatrienoyl-CoA + NADP(+). It functions in the pathway lipid metabolism; fatty acid biosynthesis. It participates in steroid biosynthesis; estrogen biosynthesis. Catalyzes the second of the four reactions of the long-chain fatty acids elongation cycle. This endoplasmic reticulum-bound enzymatic process, allows the addition of two carbons to the chain of long- and very long-chain fatty acids/VLCFAs per cycle. This enzyme has a 3-ketoacyl-CoA reductase activity, reducing 3-ketoacyl-CoA to 3-hydroxyacyl-CoA, within each cycle of fatty acid elongation. Thereby, it may participate in the production of VLCFAs of different chain lengths that are involved in multiple biological processes as precursors of membrane lipids and lipid mediators. May also catalyze the transformation of estrone (E1) into estradiol (E2) and play a role in estrogen formation. This is Very-long-chain 3-oxoacyl-CoA reductase from Homo sapiens (Human).